We begin with the raw amino-acid sequence, 402 residues long: Arginine biosynthesis bifunctional protein ArgJ (402 aa).

Substrate-binding residues include threonine 152, lysine 178, threonine 189, glutamate 275, asparagine 397, and threonine 402. Threonine 189 functions as the Nucleophile in the catalytic mechanism.

The protein belongs to the ArgJ family. In terms of assembly, heterotetramer of two alpha and two beta chains.

It is found in the cytoplasm. It catalyses the reaction N(2)-acetyl-L-ornithine + L-glutamate = N-acetyl-L-glutamate + L-ornithine. The enzyme catalyses L-glutamate + acetyl-CoA = N-acetyl-L-glutamate + CoA + H(+). The protein operates within amino-acid biosynthesis; L-arginine biosynthesis; L-ornithine and N-acetyl-L-glutamate from L-glutamate and N(2)-acetyl-L-ornithine (cyclic): step 1/1. Its pathway is amino-acid biosynthesis; L-arginine biosynthesis; N(2)-acetyl-L-ornithine from L-glutamate: step 1/4. Catalyzes two activities which are involved in the cyclic version of arginine biosynthesis: the synthesis of N-acetylglutamate from glutamate and acetyl-CoA as the acetyl donor, and of ornithine by transacetylation between N(2)-acetylornithine and glutamate. This Lactiplantibacillus plantarum (strain ATCC BAA-793 / NCIMB 8826 / WCFS1) (Lactobacillus plantarum) protein is Arginine biosynthesis bifunctional protein ArgJ.